The chain runs to 232 residues: Adenosylcobinamide-GDP ribazoletransferase (232 aa).

6 consecutive transmembrane segments (helical) span residues 32 to 52 (PIYFPLVGYIPGILFFFGGSF), 54 to 74 (NFLLKILFLILGYYFFDLFHF), 102 to 122 (VGPFAVFFGTLYVVVFWTLYL), 126 to 146 (PITFIYSSVFGRYSMNLLMFF), 172 to 192 (FFLLPLLFSMKYFFISYVVTV), and 212 to 232 (DVLGGACLMTNGLLLVVLGVV).

It belongs to the CobS family. It depends on Mg(2+) as a cofactor.

Its subcellular location is the cell inner membrane. It carries out the reaction alpha-ribazole + adenosylcob(III)inamide-GDP = adenosylcob(III)alamin + GMP + H(+). The catalysed reaction is alpha-ribazole 5'-phosphate + adenosylcob(III)inamide-GDP = adenosylcob(III)alamin 5'-phosphate + GMP + H(+). Its pathway is cofactor biosynthesis; adenosylcobalamin biosynthesis; adenosylcobalamin from cob(II)yrinate a,c-diamide: step 7/7. In terms of biological role, joins adenosylcobinamide-GDP and alpha-ribazole to generate adenosylcobalamin (Ado-cobalamin). Also synthesizes adenosylcobalamin 5'-phosphate from adenosylcobinamide-GDP and alpha-ribazole 5'-phosphate. This is Adenosylcobinamide-GDP ribazoletransferase from Thermosipho melanesiensis (strain DSM 12029 / CIP 104789 / BI429).